We begin with the raw amino-acid sequence, 68 residues long: Medusin-AS (68 aa).

The N-terminal stretch at 1–22 is a signal peptide; it reads MAFLKKSLFLVLFLGLVSLSVC. A propeptide spanning residues 23-49 is cleaved from the precursor; it reads EEEKRESEEEKNEQEEDDRDERSEEKR. Residues 24 to 46 are disordered; sequence EEKRESEEEKNEQEEDDRDERSE. The span at 31–41 shows a compositional bias: acidic residues; the sequence is EEKNEQEEDDR. Position 67 is a leucine amide (L67).

Belongs to the frog skin active peptide (FSAP) family. Medusin subfamily. As to expression, expressed by the skin glands.

The protein resides in the secreted. Functionally, antimicrobial peptide active against Gram-positive bacteria and fungi but inactive against Gram-negative bacteria. Also inhibits growth of B.dendrobatidis zoospores at high concentrations. Shows anticancer activities. Shows hemolytic activity. This Agalychnis spurrelli (Gliding leaf frog) protein is Medusin-AS.